Here is a 446-residue protein sequence, read N- to C-terminus: Sensor-type histidine kinase PrrB (446 aa).

The next 2 membrane-spanning stretches (helical) occupy residues 19–39 (VVAT…VVWV) and 151–171 (LLIC…LAAF). Positions 172-222 (AVRPFKQLAEQTRSIDAGDEAPRVEVHGASEAIEIAEAMRGMLQRIWNEQN) constitute an HAMP domain. Residues 237–446 (VSSHELRTPL…RLVLRLPGPS (210 aa)) enclose the Histidine kinase domain. His-240 is modified (phosphohistidine; by autocatalysis).

Autophosphorylated.

It is found in the cell membrane. The enzyme catalyses ATP + protein L-histidine = ADP + protein N-phospho-L-histidine.. Functionally, member of the two-component regulatory system PrrB/PrrA that is involved specifically in early intracellular multiplication of Mycobacterium and is essential for its viability. Functions as a sensor protein kinase which is autophosphorylated at a histidine residue and transfers its phosphate group to the conserved aspartic acid residue in the regulatory domain of PrrA. In turn, PrrA binds to the upstream promoter regions of target genes including itself to positively regulate their expression. This chain is Sensor-type histidine kinase PrrB (prrB), found in Mycobacterium bovis (strain ATCC BAA-935 / AF2122/97).